Reading from the N-terminus, the 317-residue chain is MAQNLSCENWLATEAILNKYYLSAFYAIEFIFGLLGNVTVVFGYLFCMKNWNSSNVYLFNLSISDFAFLCTLPILIKSYANDKGTYGDVLCISNRYVLHTNLYTSILFLTFISMDRYLLMKYPFREHFLQKKEFAILISLAVWALVTLEVLPMLTFINSVPKEEGSNCIDYASSGNPEHNLIYSLCLTLLGFLIPLSVMCFFYYKMVVFLKRRSQQQATALPLDKPQRLVVLAVVIFSILFTPYHIMRNLRIASRLDSWPQGCTQKAIKSIYTLTRPLAFLNSAINPIFYFLMGDHYREMLISKFRQYFKSLTSFRT.

At 1–23 (MAQNLSCENWLATEAILNKYYLS) the chain is on the extracellular side. An N-linked (GlcNAc...) asparagine glycan is attached at Asn-4. The chain crosses the membrane as a helical span at residues 24–47 (AFYAIEFIFGLLGNVTVVFGYLFC). The Cytoplasmic segment spans residues 48–55 (MKNWNSSN). Residues 56–76 (VYLFNLSISDFAFLCTLPILI) traverse the membrane as a helical segment. The Extracellular segment spans residues 77–101 (KSYANDKGTYGDVLCISNRYVLHTN). An intrachain disulfide couples Cys-91 to Cys-168. A helical transmembrane segment spans residues 102 to 119 (LYTSILFLTFISMDRYLL). The Cytoplasmic portion of the chain corresponds to 120–133 (MKYPFREHFLQKKE). Residues 134–157 (FAILISLAVWALVTLEVLPMLTFI) traverse the membrane as a helical segment. The Extracellular portion of the chain corresponds to 158 to 180 (NSVPKEEGSNCIDYASSGNPEHN). Residues 181–204 (LIYSLCLTLLGFLIPLSVMCFFYY) form a helical membrane-spanning segment. Over 205–228 (KMVVFLKRRSQQQATALPLDKPQR) the chain is Cytoplasmic. Residues 229–246 (LVVLAVVIFSILFTPYHI) traverse the membrane as a helical segment. At 247 to 277 (MRNLRIASRLDSWPQGCTQKAIKSIYTLTRP) the chain is on the extracellular side. Residues 278–294 (LAFLNSAINPIFYFLMG) traverse the membrane as a helical segment. At 295 to 317 (DHYREMLISKFRQYFKSLTSFRT) the chain is on the cytoplasmic side.

It belongs to the G-protein coupled receptor 1 family. Predominantly expressed in the kidney (proximal and distal tubules and the juxtaglomerular apparatus). Weakly expressed in liver, spleen and small intestine. Highly expressed in immature dendritic cells, expression rapidly downregulates after maturation. Also expressed in macrophages. Specifically expressed in intestinal tuft cells. Expression in whole muscle is attributable to major non-myofibrillar resident cell types, including stromal, endothelial and satellite cell populations.

It localises to the cell membrane. Its function is as follows. G protein-coupled receptor for succinate able to mediate signaling through Gq/GNAQ or Gi/GNAI second messengers depending on the cell type and the processes regulated. Succinate-SUCNR1 signaling serves as a link between metabolic stress, inflammation and energy homeostasis. In macrophages, plays a range of immune-regulatory roles. During inflammation, succinate-SUCNR1 signaling may act as an anti-inflammatory mediator or boost inflammation depending on the inflammatory status of cells. Hyperpolarizes M2 macrophages versus M1 phenotype through Gq signaling by regulating the transcription of genes involved in immune function. In activated M1 macrophages, plays a pro-inflammatory role in response to LPS. Expressed in dendritic cells, where it is involved in the sensing of immunological danger and enhances immunity. Mediates succinate triggered intracelleular calcium mobilization, induces migratory responses and acts in synergy with Toll-like receptor ligands for the production of proinflammatory cytokines as well as an enhancement of antigen-specific activation of helper T cells. In the small intestine, mediates the activation of tuft cells by dietary succinate and triggers type 2 immunity. In adipocytes, plays an important role in the control of energy metabolism. In response to succinate, controls leptin expression in an AMPK-JNK-CEBPA-dependent as well as circadian clock-regulated manner. In muscle tissue, is expressed in non-muscle cells and coordinates muscle remodeling in response to the succinate produced during exercise training in a paracrine manner. In retina, acts as a mediator of vessel growth during retinal development. In response to succinate, regulates the production of angiogenic factors, including VEGF, by retinal ganglion neurons. This is Succinate receptor 1 (Sucnr1) from Mus musculus (Mouse).